Consider the following 129-residue polypeptide: uncharacterized protein (129 aa).

The next 3 membrane-spanning stretches (helical) occupy residues 22–42, 55–75, and 88–108; these read LASSFSNASTLLSFVFFFFFF, VGSFSASASAETLLDFFFFFF, and LPFTAASKSSGITFLVFFFFF.

The protein localises to the membrane. This is an uncharacterized protein from Saccharomyces cerevisiae (strain ATCC 204508 / S288c) (Baker's yeast).